Consider the following 492-residue polypeptide: Cell division protein FtsA (492 aa).

Disordered regions lie at residues 288–307 (GEET…DGHE) and 429–458 (YTRT…KAPS). Residues 291-303 (TPSQNVQIPTTGS) show a composition bias toward polar residues. Over residues 436–447 (SSPTPHIHSSPT) the composition is skewed to low complexity.

It belongs to the FtsA/MreB family. In terms of assembly, self-interacts. Interacts with FtsZ.

The protein resides in the cell inner membrane. In terms of biological role, cell division protein that is involved in the assembly of the Z ring. May serve as a membrane anchor for the Z ring. The polypeptide is Cell division protein FtsA (Helicobacter pylori (strain ATCC 700392 / 26695) (Campylobacter pylori)).